The chain runs to 411 residues: Putative ion-transport protein YfeO (411 aa).

Transmembrane regions (helical) follow at residues 9-29 (MLLL…VLIA), 54-74 (DSPF…GLII), 99-119 (ALPG…SLGP), 149-169 (ILAS…AALI), 186-206 (LFAP…FFHP), 223-243 (IASG…AVWC), 258-278 (VLIL…GGPL), 296-316 (LGAG…VIAA), 322-342 (GGRI…LHAH), 343-363 (VEAV…VLVV), and 386-406 (LLCI…LLAA).

Belongs to the chloride channel (TC 2.A.49) family.

The protein localises to the cell membrane. This chain is Putative ion-transport protein YfeO, found in Salmonella agona (strain SL483).